The chain runs to 500 residues: Cysteine--tRNA ligase (500 aa).

Zn(2+) is bound at residue Cys-29. The 'HIGH' region motif lies at 31–41 (VTVYDLCHLGH). Zn(2+) contacts are provided by Cys-213, His-238, and Glu-242. Residues 270–274 (KMSKS) carry the 'KMSKS' region motif. An ATP-binding site is contributed by Lys-273.

Belongs to the class-I aminoacyl-tRNA synthetase family. Monomer. It depends on Zn(2+) as a cofactor.

It localises to the cytoplasm. It carries out the reaction tRNA(Cys) + L-cysteine + ATP = L-cysteinyl-tRNA(Cys) + AMP + diphosphate. The polypeptide is Cysteine--tRNA ligase (Prochlorococcus marinus (strain NATL1A)).